Reading from the N-terminus, the 324-residue chain is 1-deoxyxylulose-5-phosphate synthase YajO (324 aa).

Tyrosine 61 (proton donor) is an active-site residue.

This sequence belongs to the aldo/keto reductase family. Aldo/keto reductase 2 subfamily.

The enzyme catalyses D-ribulose 5-phosphate + AH2 = 1-deoxy-D-xylulose 5-phosphate + A + H2O. Its activity is regulated as follows. NADH, NADPH or ATP do not increase activity. In terms of biological role, catalyzes the conversion of ribulose 5-phosphate (Ru5P) to 1-deoxy-D-xylulose 5-phosphate (DXP), providing a direct route from pentoses to terpenes. May play a role in biosynthesis of DXP under conditions of thiamine starvation. In Escherichia coli (strain K12), this protein is 1-deoxyxylulose-5-phosphate synthase YajO (yajO).